The sequence spans 266 residues: MADAQFDSALDLLRRLNPRDTKKNLQAITSIVPDLTEDLLSSVDQPLEIRRCSKTKRDYLLCDYNRDGDSYRSPWSNEFDPPLDDGTVPSERVRKLEVAANEAFDVYRELYYEGGVGSVYFWDLDDGFAGVILLKKGVTPGAKSSGEWDSIHVFEATDRARMSHYKLTSTVILHLANETESLGEMDLSGNMTRQVEVDLPVESDASHVANVGRLVEDMELKMRNLLQEVYFGKAKDVVGELRSLASLSEASKERATQREMIMSMHR.

This sequence belongs to the F-actin-capping protein beta subunit family. In terms of assembly, component of the F-actin capping complex, composed of a heterodimer of an alpha and a beta subunit.

It is found in the cytoplasm. Its subcellular location is the cytoskeleton. The protein resides in the actin patch. Its function is as follows. F-actin-capping proteins bind in a Ca(2+)-independent manner to the fast growing ends of actin filaments (barbed end) thereby blocking the exchange of subunits at these ends. Unlike other capping proteins (such as gelsolin and severin), these proteins do not sever actin filaments. This chain is F-actin-capping protein subunit beta (cap2), found in Aspergillus oryzae (strain ATCC 42149 / RIB 40) (Yellow koji mold).